The sequence spans 152 residues: Protein-export protein SecB (152 aa).

Belongs to the SecB family. Homotetramer, a dimer of dimers. One homotetramer interacts with 1 SecA dimer.

Its subcellular location is the cytoplasm. In terms of biological role, one of the proteins required for the normal export of preproteins out of the cell cytoplasm. It is a molecular chaperone that binds to a subset of precursor proteins, maintaining them in a translocation-competent state. It also specifically binds to its receptor SecA. The protein is Protein-export protein SecB of Acinetobacter baumannii (strain AB307-0294).